A 593-amino-acid polypeptide reads, in one-letter code: Proline--tRNA ligase (593 aa).

Belongs to the class-II aminoacyl-tRNA synthetase family. ProS type 1 subfamily. As to quaternary structure, homodimer.

It localises to the cytoplasm. It carries out the reaction tRNA(Pro) + L-proline + ATP = L-prolyl-tRNA(Pro) + AMP + diphosphate. Catalyzes the attachment of proline to tRNA(Pro) in a two-step reaction: proline is first activated by ATP to form Pro-AMP and then transferred to the acceptor end of tRNA(Pro). As ProRS can inadvertently accommodate and process non-cognate amino acids such as alanine and cysteine, to avoid such errors it has two additional distinct editing activities against alanine. One activity is designated as 'pretransfer' editing and involves the tRNA(Pro)-independent hydrolysis of activated Ala-AMP. The other activity is designated 'posttransfer' editing and involves deacylation of mischarged Ala-tRNA(Pro). The misacylated Cys-tRNA(Pro) is not edited by ProRS. The protein is Proline--tRNA ligase of Synechococcus sp. (strain CC9605).